We begin with the raw amino-acid sequence, 619 residues long: Manganese lipoxygenase (619 aa).

Positions Met1–Ala16 are cleaved as a signal peptide. Asn32, Asn42, Asn62, Asn86, Asn164, and Asn229 each carry an N-linked (GlcNAc...) asparagine glycan. Positions Thr55 to Val619 constitute a Lipoxygenase domain. The Mn(2+) site is built by His298, His303, His483, and Asn487. N-linked (GlcNAc...) asparagine glycans are attached at residues Asn515 and Asn549. Position 619 (Val619) interacts with Mn(2+).

It belongs to the lipoxygenase family. Manganese lipoxygenase subfamily. The cofactor is Mn(2+).

It localises to the secreted. The enzyme catalyses (9Z,12Z)-octadecadienoate + O2 = (9S)-hydroperoxy-(10E,12Z)-octadecadienoate. The catalysed reaction is (9Z,12Z)-octadecadienoate + O2 = (11S)-hydroperoxy-(9Z,12Z)-octadecadienoate. It carries out the reaction (9Z,12Z)-octadecadienoate + O2 = (13R)-hydroperoxy-(9Z,11E)-octadecadienoate. It catalyses the reaction (9Z,12Z,15Z)-octadecatrienoate + O2 = (9S)-hydroperoxy-(10E,12Z,15Z)-octadecatrienoate. The enzyme catalyses (9Z,12Z,15Z)-octadecatrienoate + O2 = (11R)-hydroperoxy-(9Z,12Z,15Z)-octadecatrienoate. The catalysed reaction is (9Z,12Z,15Z)-octadecatrienoate + O2 = (13R)-hydroperoxy-(9Z,11E,15Z)-octadecatrienoate. It carries out the reaction (9S)-hydroperoxy-(10E,12Z,15Z)-octadecatrienoate + O2 = (9S,16S)-dihydroperoxy-(10E,12Z,14E)-octadecatrienoate. Functionally, lipoxygenase that metabolizes linoleic and alpha-linolenic acids to 9S-, 11- and 13R-hydroperoxy fatty acids. At the end of lipoxygenation, the intermediate product 11S-HPODE from linoleic acid is then transformed into 9S-HPODE and 13R-HPODE as the final products. The intermediate product 11R-HPOTrE from alpha-linolenic acid is transformed into 9S-HPOTrE and 13R-HPOTrE as the final products. 9S-HPOTrE is further oxidized by the enzyme to 9S,16S-DiHPOTrE as the end product. The chain is Manganese lipoxygenase from Pyricularia oryzae (strain 70-15 / ATCC MYA-4617 / FGSC 8958) (Rice blast fungus).